A 135-amino-acid chain; its full sequence is MALYEHMFLARQDVAPQQVDELLSLYKGVIETHGGKVGRVENWGLRPLAYRIRKNRKAYYVLVNIDAPAAAIAEMERQMRINEDILRYMTIRVEKHEKEKSAMLSHLDRNAHAGQDEERSRSPRRQRENAIERVE.

Residues 99–135 (EKSAMLSHLDRNAHAGQDEERSRSPRRQRENAIERVE) form a disordered region.

Belongs to the bacterial ribosomal protein bS6 family.

In terms of biological role, binds together with bS18 to 16S ribosomal RNA. The sequence is that of Small ribosomal subunit protein bS6 from Bartonella tribocorum (strain CIP 105476 / IBS 506).